The sequence spans 120 residues: MIQKNSRLVVADNSGAKEVLVIGILGGTRRRYANIGDVVVVAVKSGSGGTVKKHDVLKGVIVRSKSGIRHENGSYIKFYDNALVLLKEDLSIIGTRIFGPVVRELGKKFSKIVSLAQLVL.

The protein belongs to the universal ribosomal protein uL14 family. In terms of assembly, part of the 50S ribosomal subunit. Forms a cluster with proteins L3 and L19. In the 70S ribosome, L14 and L19 interact and together make contacts with the 16S rRNA in bridges B5 and B8.

Binds to 23S rRNA. Forms part of two intersubunit bridges in the 70S ribosome. In Phytoplasma australiense, this protein is Large ribosomal subunit protein uL14.